Reading from the N-terminus, the 359-residue chain is Ribosomal RNA small subunit methyltransferase H (359 aa).

S-adenosyl-L-methionine contacts are provided by residues 39–41, Asp58, Phe87, Asp108, and Gln115; that span reads AGH. The tract at residues 339 to 359 is disordered; the sequence is IQGSASPGRAKNTARIRTRRG. Residues 350–359 are compositionally biased toward basic residues; it reads NTARIRTRRG.

It belongs to the methyltransferase superfamily. RsmH family.

The protein localises to the cytoplasm. The enzyme catalyses cytidine(1402) in 16S rRNA + S-adenosyl-L-methionine = N(4)-methylcytidine(1402) in 16S rRNA + S-adenosyl-L-homocysteine + H(+). Functionally, specifically methylates the N4 position of cytidine in position 1402 (C1402) of 16S rRNA. This is Ribosomal RNA small subunit methyltransferase H from Bifidobacterium longum subsp. infantis (strain ATCC 15697 / DSM 20088 / JCM 1222 / NCTC 11817 / S12).